A 233-amino-acid chain; its full sequence is Hydroxyacylglutathione hydrolase (233 aa).

Zn(2+) contacts are provided by His52, His54, Asp56, His57, His108, Asp125, and His163.

Belongs to the metallo-beta-lactamase superfamily. Glyoxalase II family. Monomer. Zn(2+) serves as cofactor.

It catalyses the reaction an S-(2-hydroxyacyl)glutathione + H2O = a 2-hydroxy carboxylate + glutathione + H(+). The protein operates within secondary metabolite metabolism; methylglyoxal degradation; (R)-lactate from methylglyoxal: step 2/2. Functionally, thiolesterase that catalyzes the hydrolysis of S-D-lactoyl-glutathione to form glutathione and D-lactic acid. The chain is Hydroxyacylglutathione hydrolase from Histophilus somni (strain 2336) (Haemophilus somnus).